Reading from the N-terminus, the 179-residue chain is ATP synthase subunit delta 1 (179 aa).

This sequence belongs to the ATPase delta chain family. In terms of assembly, F-type ATPases have 2 components, F(1) - the catalytic core - and F(0) - the membrane proton channel. F(1) has five subunits: alpha(3), beta(3), gamma(1), delta(1), epsilon(1). F(0) has three main subunits: a(1), b(2) and c(10-14). The alpha and beta chains form an alternating ring which encloses part of the gamma chain. F(1) is attached to F(0) by a central stalk formed by the gamma and epsilon chains, while a peripheral stalk is formed by the delta and b chains.

It localises to the cell inner membrane. In terms of biological role, f(1)F(0) ATP synthase produces ATP from ADP in the presence of a proton or sodium gradient. F-type ATPases consist of two structural domains, F(1) containing the extramembraneous catalytic core and F(0) containing the membrane proton channel, linked together by a central stalk and a peripheral stalk. During catalysis, ATP synthesis in the catalytic domain of F(1) is coupled via a rotary mechanism of the central stalk subunits to proton translocation. This protein is part of the stalk that links CF(0) to CF(1). It either transmits conformational changes from CF(0) to CF(1) or is implicated in proton conduction. This is ATP synthase subunit delta 1 from Syntrophotalea carbinolica (strain DSM 2380 / NBRC 103641 / GraBd1) (Pelobacter carbinolicus).